The sequence spans 540 residues: Chaperonin GroEL (540 aa).

ATP-binding positions include 30–33 (TLGP), Lys-51, 87–91 (DGTTT), Gly-415, and Asp-495.

The protein belongs to the chaperonin (HSP60) family. In terms of assembly, forms a cylinder of 14 subunits composed of two heptameric rings stacked back-to-back. Interacts with the co-chaperonin GroES.

The protein resides in the cytoplasm. It carries out the reaction ATP + H2O + a folded polypeptide = ADP + phosphate + an unfolded polypeptide.. Its function is as follows. Together with its co-chaperonin GroES, plays an essential role in assisting protein folding. The GroEL-GroES system forms a nano-cage that allows encapsulation of the non-native substrate proteins and provides a physical environment optimized to promote and accelerate protein folding. This chain is Chaperonin GroEL, found in Serratia ficaria.